The following is a 203-amino-acid chain: Probable metallo-hydrolase MJ0296 (203 aa).

Zn(2+) contacts are provided by histidine 86, histidine 88, aspartate 90, histidine 91, histidine 135, aspartate 152, and histidine 193.

It belongs to the metallo-beta-lactamase superfamily. It depends on Zn(2+) as a cofactor.

This chain is Probable metallo-hydrolase MJ0296, found in Methanocaldococcus jannaschii (strain ATCC 43067 / DSM 2661 / JAL-1 / JCM 10045 / NBRC 100440) (Methanococcus jannaschii).